Here is a 55-residue protein sequence, read N- to C-terminus: Large ribosomal subunit protein uL15 (55 aa).

The protein belongs to the universal ribosomal protein uL15 family. As to quaternary structure, part of the 50S ribosomal subunit.

In terms of biological role, binds to the 23S rRNA. This is Large ribosomal subunit protein uL15 (rplO) from Lactococcus lactis subsp. cremoris (Streptococcus cremoris).